Here is a 627-residue protein sequence, read N- to C-terminus: Hemocyanin B chain (627 aa).

Cu cation contacts are provided by His173, His177, and His204. Residues Asn312 and Asn316 are each glycosylated (N-linked (GlcNAc...) asparagine). Residues His324, His328, and His364 each contribute to the Cu cation site. Residues Cys534 and Cys582 are joined by a disulfide bond.

The protein belongs to the tyrosinase family. Hemocyanin subfamily. Tarantula hemocyanin is a 24-chain polymer with seven different chains identified. In terms of tissue distribution, hemolymph.

It localises to the secreted. Its subcellular location is the extracellular space. Its function is as follows. Hemocyanins are copper-containing oxygen carriers occurring freely dissolved in the hemolymph of many mollusks and arthropods. In Aphonopelma sp. (American tarantula), this protein is Hemocyanin B chain (HCB).